The sequence spans 101 residues: MAIKIKVEFLGGLDIISNSVREHKCVIPFEEGEATVADLITYITKNIISDPKDIPVFIEDGTVRPGILVLINDTDWELEGMEEYVIESGDVFTFTSTLHGG.

The residue at position 101 (glycine 101) is a 1-thioglycine. Glycine 101 participates in a covalent cross-link: Glycyl lysine isopeptide (Gly-Lys) (interchain with K-? in acceptor proteins).

It belongs to the URM1 family. C-terminal thiocarboxylation occurs in 2 steps, it is first acyl-adenylated (-COAMP) via the hesA/moeB/thiF part of UBA4, then thiocarboxylated (-COSH) via the rhodanese domain of UBA4.

It is found in the cytoplasm. The protein operates within tRNA modification; 5-methoxycarbonylmethyl-2-thiouridine-tRNA biosynthesis. Functionally, acts as a sulfur carrier required for 2-thiolation of mcm(5)S(2)U at tRNA wobble positions of cytosolic tRNA(Lys), tRNA(Glu) and tRNA(Gln). Serves as sulfur donor in tRNA 2-thiolation reaction by being thiocarboxylated (-COSH) at its C-terminus by the MOCS3 homolog UBA4. The sulfur is then transferred to tRNA to form 2-thiolation of mcm(5)S(2)U. Prior mcm(5) tRNA modification by the elongator complex is required for 2-thiolation. Also acts as a ubiquitin-like protein (UBL) that is covalently conjugated via an isopeptide bond to lysine residues of target proteins such as AHP1. The thiocarboxylated form serves as substrate for conjugation and oxidative stress specifically induces the formation of UBL-protein conjugates. This Candida albicans (strain SC5314 / ATCC MYA-2876) (Yeast) protein is Ubiquitin-related modifier 1.